The sequence spans 318 residues: Ficolin-1-B (318 aa).

Residues 1 to 19 form the signal peptide; sequence MTRWVQTFLLLVAVIRSYA. Residues 42–99 form the Collagen-like domain; that stretch reads GCPGIPGVPGPQGPSGPAGAKGEKGFPGIPGKMGPTGLKGERGISGPKGQKGDKGDPG. The Fibrinogen C-terminal domain maps to 100–318; it reads IPVVGMAQNC…VSEIKFRPQP (219 aa). A disulfide bond links cysteine 109 and cysteine 137. Asparagine 205 and asparagine 222 each carry an N-linked (GlcNAc...) asparagine glycan. Aspartate 253 serves as a coordination point for Ca(2+). The N-linked (GlcNAc...) asparagine glycan is linked to asparagine 254. Residues aspartate 255 and serine 257 each coordinate Ca(2+). Cysteine 261 and cysteine 274 are joined by a disulfide. 273–275 lines the a carbohydrate pocket; sequence SCH. Asparagine 287 carries N-linked (GlcNAc...) asparagine glycosylation.

The protein belongs to the ficolin lectin family. As to quaternary structure, homotrimer. May form higher-order oligomers. Post-translationally, N-glycosylated. Expressed in peripheral blood leukocytes. Also detected at lower levels in spleen and lung.

Its subcellular location is the secreted. Its function is as follows. May function in innate immunity through activation of the lectin complement pathway. Binds to GalNAc and GlcNAc carbohydrate moieties. The polypeptide is Ficolin-1-B (Xenopus laevis (African clawed frog)).